Here is a 109-residue protein sequence, read N- to C-terminus: Spermidine export protein MdtI (109 aa).

Helical transmembrane passes span 6–26 (WIHGAWLGLAIVLEIAANVLL), 36–56 (CYGILSLAAVLAAFSALSQAV), 64–84 (AYALWGGFGIAATLAAGWVLF), and 88–108 (LNPKGWVGVILLLAGMVMIKF).

Belongs to the drug/metabolite transporter (DMT) superfamily. Small multidrug resistance (SMR) (TC 2.A.7.1) family. MdtI subfamily. In terms of assembly, forms a complex with MdtJ.

Its subcellular location is the cell inner membrane. Catalyzes the excretion of spermidine. The protein is Spermidine export protein MdtI of Salmonella paratyphi A (strain ATCC 9150 / SARB42).